A 214-amino-acid polypeptide reads, in one-letter code: Sugar fermentation stimulation protein homolog (214 aa).

It belongs to the SfsA family.

The sequence is that of Sugar fermentation stimulation protein homolog from Aquifex aeolicus (strain VF5).